Reading from the N-terminus, the 215-residue chain is uncharacterized protein (215 aa).

The helical transmembrane segment at 98-119 (AAALAVAVASLCVCTLLLTHIV) threads the bilayer.

The protein localises to the membrane. This is an uncharacterized protein from Treponema pallidum (strain Nichols).